The primary structure comprises 275 residues: MRPLQAEIIKALHVAPTIDPEVEIRRSIDFLKAYLTKNTFLKTYVLGISGGQDSTLAGKLTEMAITEMRQETGDDRYQFIAVRLPYGNQADEADAMAAIDFMQADVTDRVDIQPATDAMVTALEANQLTIHDFNKGNIKARQRMIVQYGIAGEMHGAVVGTDHAAEAVTGFYTKYGDGGADIVPLWRLNKRQGKQMLAALDAPKHLYDKVPTADLEEDRPALPDEVALGVRYDDIDDYLEGRTVSDAAAEKIEAWYLKTAHKRHAAITVFDDFWK.

Residue 47-54 coordinates ATP; it reads GISGGQDS. Aspartate 53 is a binding site for Mg(2+). Deamido-NAD(+) is bound at residue arginine 141. Threonine 161 serves as a coordination point for ATP. Residue glutamate 166 participates in Mg(2+) binding. The deamido-NAD(+) site is built by lysine 174 and aspartate 181. Residues lysine 190 and threonine 212 each contribute to the ATP site. Residue 261-262 participates in deamido-NAD(+) binding; sequence HK.

It belongs to the NAD synthetase family. Homodimer.

The enzyme catalyses deamido-NAD(+) + NH4(+) + ATP = AMP + diphosphate + NAD(+) + H(+). It functions in the pathway cofactor biosynthesis; NAD(+) biosynthesis; NAD(+) from deamido-NAD(+) (ammonia route): step 1/1. Catalyzes the ATP-dependent amidation of deamido-NAD to form NAD. Uses ammonia as a nitrogen source. The protein is NH(3)-dependent NAD(+) synthetase of Lactiplantibacillus plantarum (strain ATCC BAA-793 / NCIMB 8826 / WCFS1) (Lactobacillus plantarum).